The chain runs to 431 residues: Trigger factor (431 aa).

The region spanning 165–250 is the PPIase FKBP-type domain; it reads GDTVVIDFDG…IHELKRKELP (86 aa).

The protein belongs to the FKBP-type PPIase family. Tig subfamily.

It localises to the cytoplasm. The catalysed reaction is [protein]-peptidylproline (omega=180) = [protein]-peptidylproline (omega=0). In terms of biological role, involved in protein export. Acts as a chaperone by maintaining the newly synthesized protein in an open conformation. Functions as a peptidyl-prolyl cis-trans isomerase. This Leuconostoc citreum (strain KM20) protein is Trigger factor.